Here is a 338-residue protein sequence, read N- to C-terminus: Tetraacyldisaccharide 4'-kinase (338 aa).

ATP is bound at residue 51-58 (HLGGAGKT).

The protein belongs to the LpxK family.

It carries out the reaction a lipid A disaccharide + ATP = a lipid IVA + ADP + H(+). It participates in glycolipid biosynthesis; lipid IV(A) biosynthesis; lipid IV(A) from (3R)-3-hydroxytetradecanoyl-[acyl-carrier-protein] and UDP-N-acetyl-alpha-D-glucosamine: step 6/6. Transfers the gamma-phosphate of ATP to the 4'-position of a tetraacyldisaccharide 1-phosphate intermediate (termed DS-1-P) to form tetraacyldisaccharide 1,4'-bis-phosphate (lipid IVA). The sequence is that of Tetraacyldisaccharide 4'-kinase from Rhodopseudomonas palustris (strain BisB5).